Consider the following 506-residue polypeptide: Dual specificity protein kinase shkC (506 aa).

A disordered region spans residues 1–21; it reads MDSGLGSSYPEERSGPPEIRP. Over residues 10-21 the composition is skewed to basic and acidic residues; sequence PEERSGPPEIRP. The Protein kinase domain maps to 24–284; it reads INFEELIGTG…IISALDHVII (261 aa). ATP contacts are provided by residues 30–38 and Lys51; that span reads IGTGSFGKV. Asp147 (proton acceptor) is an active-site residue. The SH2 domain occupies 396 to 488; that stretch reads WFHGDLDTTE…KLDSQLGVPN (93 aa).

Belongs to the protein kinase superfamily. TKL Ser/Thr protein kinase family. SH2 domain-containing protein kinase subfamily.

Its subcellular location is the membrane. It catalyses the reaction L-seryl-[protein] + ATP = O-phospho-L-seryl-[protein] + ADP + H(+). The enzyme catalyses L-threonyl-[protein] + ATP = O-phospho-L-threonyl-[protein] + ADP + H(+). Required for proper chemotaxis and phagocytosis; proper spatiotemporal control of F-actin levels in chemotaxing cells. Negative regulator of the PI3K (phosphatidylinositol 3 kinase) pathway. Predominantly phosphorylates serines and threonines and tyrosines at a lower level. The polypeptide is Dual specificity protein kinase shkC (shkC) (Dictyostelium discoideum (Social amoeba)).